A 180-amino-acid chain; its full sequence is Type-1 fimbrial protein, C chain (180 aa).

Residues 1-23 (MKLKFISMAVFSALTLGVATNAS) form the signal peptide. The cysteines at positions 44 and 84 are disulfide-linked.

Belongs to the fimbrial protein family.

It localises to the fimbrium. Fimbriae (also called pili), polar filaments radiating from the surface of the bacterium to a length of 0.5-1.5 micrometers and numbering 100-300 per cell, enable bacteria to colonize the epithelium of specific host organs. This chain is Type-1 fimbrial protein, C chain (pilC), found in Escherichia coli O6:H1 (strain CFT073 / ATCC 700928 / UPEC).